Consider the following 384-residue polypeptide: Flap endonuclease 1 (384 aa).

Residues 1–105 form an N-domain region; it reads MGIKGLTKLL…GELAKRKDKR (105 aa). Residue aspartate 34 participates in Mg(2+) binding. Arginine 71 contributes to the DNA binding site. 5 residues coordinate Mg(2+): aspartate 87, glutamate 159, glutamate 161, aspartate 180, and aspartate 182. The tract at residues 123-254 is I-domain; it reads EIEKLSKRTV…VNALKYIKQY (132 aa). Residue glutamate 159 participates in DNA binding. Residues glycine 232 and aspartate 234 each contribute to the DNA site. Aspartate 234 is a binding site for Mg(2+). The interval 337 to 345 is interaction with PCNA; that stretch reads GQNRLETFF. Residues 353–384 form a disordered region; it reads STVGKRKEPEKGKGKFGAAGGKKSKGVTKRKF. Residues 374–384 show a composition bias toward basic residues; that stretch reads KKSKGVTKRKF.

The protein belongs to the XPG/RAD2 endonuclease family. FEN1 subfamily. In terms of assembly, interacts with PCNA. Three molecules of FEN1 bind to one PCNA trimer with each molecule binding to one PCNA monomer. PCNA stimulates the nuclease activity without altering cleavage specificity. Mg(2+) is required as a cofactor. In terms of processing, phosphorylated. Phosphorylation upon DNA damage induces relocalization to the nuclear plasma.

The protein localises to the nucleus. It is found in the nucleolus. The protein resides in the nucleoplasm. It localises to the mitochondrion. Functionally, structure-specific nuclease with 5'-flap endonuclease and 5'-3' exonuclease activities involved in DNA replication and repair. During DNA replication, cleaves the 5'-overhanging flap structure that is generated by displacement synthesis when DNA polymerase encounters the 5'-end of a downstream Okazaki fragment. It enters the flap from the 5'-end and then tracks to cleave the flap base, leaving a nick for ligation. Also involved in the long patch base excision repair (LP-BER) pathway, by cleaving within the apurinic/apyrimidinic (AP) site-terminated flap. Acts as a genome stabilization factor that prevents flaps from equilibrating into structures that lead to duplications and deletions. Also possesses 5'-3' exonuclease activity on nicked or gapped double-stranded DNA, and exhibits RNase H activity. Also involved in replication and repair of rDNA and in repairing mitochondrial DNA. This chain is Flap endonuclease 1, found in Micromonas commoda (strain RCC299 / NOUM17 / CCMP2709) (Picoplanktonic green alga).